Consider the following 372-residue polypeptide: Cobalt-precorrin-5B C(1)-methyltransferase (372 aa).

This sequence belongs to the CbiD family.

The catalysed reaction is Co-precorrin-5B + S-adenosyl-L-methionine = Co-precorrin-6A + S-adenosyl-L-homocysteine. The protein operates within cofactor biosynthesis; adenosylcobalamin biosynthesis; cob(II)yrinate a,c-diamide from sirohydrochlorin (anaerobic route): step 6/10. In terms of biological role, catalyzes the methylation of C-1 in cobalt-precorrin-5B to form cobalt-precorrin-6A. The chain is Cobalt-precorrin-5B C(1)-methyltransferase from Geobacillus kaustophilus (strain HTA426).